Consider the following 180-residue polypeptide: UPF0227 protein Spro_1925 (180 aa).

The protein belongs to the UPF0227 family.

This chain is UPF0227 protein Spro_1925, found in Serratia proteamaculans (strain 568).